The chain runs to 350 residues: tRNA uridine(34) hydroxylase (350 aa).

The region spanning 146–240 is the Rhodanese domain; it reads DDPDALFIDM…YARKAREQGL (95 aa). C200 acts as the Cysteine persulfide intermediate in catalysis.

The protein belongs to the TrhO family.

It catalyses the reaction uridine(34) in tRNA + AH2 + O2 = 5-hydroxyuridine(34) in tRNA + A + H2O. Functionally, catalyzes oxygen-dependent 5-hydroxyuridine (ho5U) modification at position 34 in tRNAs, the first step in 5-carboxymethoxyuridine (cmo5U) biosynthesis. May be part of an alternate pathway, which is able to bypass cmo5U biogenesis in a subset of tRNAs under aerobic conditions. This Escherichia coli O127:H6 (strain E2348/69 / EPEC) protein is tRNA uridine(34) hydroxylase.